We begin with the raw amino-acid sequence, 644 residues long: Exoribonuclease 2 (644 aa).

In terms of domain architecture, RNB spans 189–516; the sequence is REDLTALDFV…NHRLLKAVIK (328 aa). One can recognise an S1 motif domain in the interval 561–643; that stretch reads DTRFAAEIVD…ETRSIIARPV (83 aa).

Belongs to the RNR ribonuclease family. RNase II subfamily.

The protein resides in the cytoplasm. The enzyme catalyses Exonucleolytic cleavage in the 3'- to 5'-direction to yield nucleoside 5'-phosphates.. Involved in mRNA degradation. Hydrolyzes single-stranded polyribonucleotides processively in the 3' to 5' direction. This is Exoribonuclease 2 from Escherichia coli O8 (strain IAI1).